Here is a 92-residue protein sequence, read N- to C-terminus: Small ribosomal subunit protein uS19 (92 aa).

Belongs to the universal ribosomal protein uS19 family.

Functionally, protein S19 forms a complex with S13 that binds strongly to the 16S ribosomal RNA. The protein is Small ribosomal subunit protein uS19 of Clostridium botulinum (strain Eklund 17B / Type B).